The primary structure comprises 219 residues: ATP-dependent Clp protease proteolytic subunit (219 aa).

Residues 1–22 are disordered; that stretch reads MPVGVPKVPFLNPNPDPEPDSV. Catalysis depends on Ser-116, which acts as the Nucleophile. His-141 is a catalytic residue.

It belongs to the peptidase S14 family. As to quaternary structure, component of the chloroplastic Clp protease core complex.

It localises to the plastid. Its subcellular location is the chloroplast stroma. It carries out the reaction Hydrolysis of proteins to small peptides in the presence of ATP and magnesium. alpha-casein is the usual test substrate. In the absence of ATP, only oligopeptides shorter than five residues are hydrolyzed (such as succinyl-Leu-Tyr-|-NHMec, and Leu-Tyr-Leu-|-Tyr-Trp, in which cleavage of the -Tyr-|-Leu- and -Tyr-|-Trp bonds also occurs).. Its function is as follows. Cleaves peptides in various proteins in a process that requires ATP hydrolysis. Has a chymotrypsin-like activity. Plays a major role in the degradation of misfolded proteins. This chain is ATP-dependent Clp protease proteolytic subunit, found in Pelargonium hortorum (Common geranium).